A 372-amino-acid polypeptide reads, in one-letter code: Aminomethyltransferase (372 aa).

It belongs to the GcvT family. As to quaternary structure, the glycine cleavage system is composed of four proteins: P, T, L and H.

It catalyses the reaction N(6)-[(R)-S(8)-aminomethyldihydrolipoyl]-L-lysyl-[protein] + (6S)-5,6,7,8-tetrahydrofolate = N(6)-[(R)-dihydrolipoyl]-L-lysyl-[protein] + (6R)-5,10-methylene-5,6,7,8-tetrahydrofolate + NH4(+). Functionally, the glycine cleavage system catalyzes the degradation of glycine. The sequence is that of Aminomethyltransferase from Prochlorococcus marinus (strain NATL1A).